The sequence spans 379 residues: MKIIRKNHPLLKIINHSFIDLPTPSNISSWWNFGSLLGICLMIQILTGLFLAMHYTSDTTTAFSSVAHICRDVNYGWLIRYLHANGASMFFICLFIHVGRGIYYGSYVLSETWNIGIILFFTTMATAFVGYVLPWGQMSFWGATVITNLLSAIPYIGTTLVEWIWGGFSVDKATLTRFFAFHFILPFIITAFVLVHLLFLHETGSNNPSGLNSDSDKIPFHPYYTIKDLLGILLLLMALMILALFFPDVLGDPDNFTPANPLNTPAHIKPXWYFLFAYAILRSIPNKLGGVLALILSILILAAFPLLNTSKQHGLIYRPITQTIYWTFIANLLILTWIGGQPVKYPFTMXGXIASITYFIIIIILMPMSNTIENNIIKL.

4 helical membrane-spanning segments follow: residues 33-53, 77-98, 113-133, and 178-198; these read FGSL…FLAM, WLIR…FIHV, WNIG…GYVL, and FFAF…VHLL. Residues H83 and H97 each contribute to the heme b site. Heme b is bound by residues H182 and H196. A ubiquinone is bound at residue H201. 4 helical membrane passes run 226–246, 288–308, 320–340, and 347–367; these read IKDL…ALFF, LGGV…PLLN, ITQT…WIGG, and FTMX…ILMP.

Belongs to the cytochrome b family. The cytochrome bc1 complex contains 11 subunits: 3 respiratory subunits (MT-CYB, CYC1 and UQCRFS1), 2 core proteins (UQCRC1 and UQCRC2) and 6 low-molecular weight proteins (UQCRH/QCR6, UQCRB/QCR7, UQCRQ/QCR8, UQCR10/QCR9, UQCR11/QCR10 and a cleavage product of UQCRFS1). This cytochrome bc1 complex then forms a dimer. Heme b is required as a cofactor.

Its subcellular location is the mitochondrion inner membrane. Component of the ubiquinol-cytochrome c reductase complex (complex III or cytochrome b-c1 complex) that is part of the mitochondrial respiratory chain. The b-c1 complex mediates electron transfer from ubiquinol to cytochrome c. Contributes to the generation of a proton gradient across the mitochondrial membrane that is then used for ATP synthesis. In Necromys amoenus (Pleasant bolo mouse), this protein is Cytochrome b (MT-CYB).